A 568-amino-acid chain; its full sequence is O-fucosyltransferase 9 (568 aa).

Residues 1 to 19 (MHGLSRLGNGSSNGRINIP) show a composition bias toward low complexity. The segment at 1 to 33 (MHGLSRLGNGSSNGRINIPSPSPPSSPRIRHTR) is disordered. The chain crosses the membrane as a helical; Signal-anchor for type II membrane protein span at residues 65–85 (LLLAPLLYIAGMLLFMGSFGF). Asn-125, Asn-151, Asn-189, and Asn-243 each carry an N-linked (GlcNAc...) asparagine glycan. 336-338 (HLR) serves as a coordination point for substrate. Asn-408 and Asn-409 each carry an N-linked (GlcNAc...) asparagine glycan.

It belongs to the glycosyltransferase GT106 family.

The protein localises to the membrane. It participates in glycan metabolism. The chain is O-fucosyltransferase 9 from Arabidopsis thaliana (Mouse-ear cress).